We begin with the raw amino-acid sequence, 321 residues long: Malate dehydrogenase (321 aa).

NAD(+)-binding positions include 13-18 and D38; that span reads GAGNIG. Positions 87 and 93 each coordinate substrate. Residues N100 and 123–125 each bind NAD(+); that span reads VTN. Substrate-binding residues include N125 and R156. H180 serves as the catalytic Proton acceptor.

This sequence belongs to the LDH/MDH superfamily. MDH type 3 family.

It catalyses the reaction (S)-malate + NAD(+) = oxaloacetate + NADH + H(+). Functionally, catalyzes the reversible oxidation of malate to oxaloacetate. The chain is Malate dehydrogenase from Anaplasma phagocytophilum (strain HZ).